Here is a 608-residue protein sequence, read N- to C-terminus: Elongation factor 4 (608 aa).

A tr-type G domain is found at 11-193 (DRIRNFSIIA…QIVQKIPAPS (183 aa)). GTP-binding positions include 23–28 (DHGKST) and 140–143 (NKID).

This sequence belongs to the TRAFAC class translation factor GTPase superfamily. Classic translation factor GTPase family. LepA subfamily.

It is found in the cell membrane. It carries out the reaction GTP + H2O = GDP + phosphate + H(+). Required for accurate and efficient protein synthesis under certain stress conditions. May act as a fidelity factor of the translation reaction, by catalyzing a one-codon backward translocation of tRNAs on improperly translocated ribosomes. Back-translocation proceeds from a post-translocation (POST) complex to a pre-translocation (PRE) complex, thus giving elongation factor G a second chance to translocate the tRNAs correctly. Binds to ribosomes in a GTP-dependent manner. The sequence is that of Elongation factor 4 from Anoxybacillus flavithermus (strain DSM 21510 / WK1).